We begin with the raw amino-acid sequence, 714 residues long: Forkhead box protein P2 (714 aa).

Residues 1–28 show a composition bias toward polar residues; that stretch reads MMQESATETISNSSMNQNGMSTLSSQLD. 2 disordered regions span residues 1-45 and 284-338; these read MMQE…SEVS and KHGG…TGAS. Residues 291 to 304 are compositionally biased toward low complexity; the sequence is TTNNSSSTTSSTTS. The segment covering 314–323 has biased composition (polar residues); it reads SIVNGQSSVL. Residues 325–336 are compositionally biased toward basic and acidic residues; the sequence is ARRDSSSHEETG. The segment at 345–370 adopts a C2H2-type zinc-finger fold; it reads GVCKWPGCESICEDFGQFLKHLNNEH. Residues 387–408 are leucine-zipper; it reads VQQLEIQLSKERERLQAMMTHL. A CTBP1-binding region spans residues 421 to 425; sequence PLNLV. Low complexity predominate over residues 437–458; that stretch reads TSPQSLPQTPTTPTAPVTPITQ. A disordered region spans residues 437 to 464; it reads TSPQSLPQTPTTPTAPVTPITQGPSVIT. Residues 503–593 constitute a DNA-binding region (fork-head); it reads RPPFTYATLI…SQKITGSPTL (91 aa). 2 disordered regions span residues 648–667 and 677–714; these read LDHI…QPHI and VIAE…EDLE. The span at 698–714 shows a compositional bias: acidic residues; sequence LEDDREIEEEPLSEDLE.

As to quaternary structure, forms homodimers and heterodimers with FOXP1 and FOXP4. Dimerization is required for DNA-binding. Interacts with CTBP1. Interacts with FOXP1. Interacts with TBR1. Interacts with ZMYM2.

The protein localises to the nucleus. Functionally, transcriptional repressor that may play a role in the specification and differentiation of lung epithelium. May also play a role in developing neural, gastrointestinal and cardiovascular tissues. Can act with CTBP1 to synergistically repress transcription but CTPBP1 is not essential. Plays a role in synapse formation by regulating SRPX2 levels. This is Forkhead box protein P2 (FOXP2) from Macaca mulatta (Rhesus macaque).